We begin with the raw amino-acid sequence, 474 residues long: tRNA-2-methylthio-N(6)-dimethylallyladenosine synthase (474 aa).

One can recognise an MTTase N-terminal domain in the interval 3–120; that stretch reads KKLHIKTWGC…LPDMIEQVRR (118 aa). [4Fe-4S] cluster is bound by residues Cys-12, Cys-49, Cys-83, Cys-157, Cys-161, and Cys-164. In terms of domain architecture, Radical SAM core spans 143–375; that stretch reads RAEGPTAFVS…QDRITQQAMR (233 aa). The region spanning 378-441 is the TRAM domain; sequence RHMMGTVQRI…TNSLRGKFIR (64 aa).

It belongs to the methylthiotransferase family. MiaB subfamily. Monomer. Requires [4Fe-4S] cluster as cofactor.

It localises to the cytoplasm. It carries out the reaction N(6)-dimethylallyladenosine(37) in tRNA + (sulfur carrier)-SH + AH2 + 2 S-adenosyl-L-methionine = 2-methylsulfanyl-N(6)-dimethylallyladenosine(37) in tRNA + (sulfur carrier)-H + 5'-deoxyadenosine + L-methionine + A + S-adenosyl-L-homocysteine + 2 H(+). In terms of biological role, catalyzes the methylthiolation of N6-(dimethylallyl)adenosine (i(6)A), leading to the formation of 2-methylthio-N6-(dimethylallyl)adenosine (ms(2)i(6)A) at position 37 in tRNAs that read codons beginning with uridine. The polypeptide is tRNA-2-methylthio-N(6)-dimethylallyladenosine synthase (Shewanella putrefaciens (strain CN-32 / ATCC BAA-453)).